The primary structure comprises 674 residues: Methionine--tRNA ligase (674 aa).

Residues 11-21 carry the 'HIGH' region motif; the sequence is PYANGDLHLGH. Zn(2+)-binding residues include cysteine 142, cysteine 145, cysteine 155, and cysteine 158. The 'KMSKS' region signature appears at 330–334; the sequence is KMSKS. Position 333 (lysine 333) interacts with ATP. Residues 574–674 form the tRNA-binding domain; sequence DFMKVDLRIA…EGAQPGMRVK (101 aa).

The protein belongs to the class-I aminoacyl-tRNA synthetase family. MetG type 1 subfamily. As to quaternary structure, homodimer. Zn(2+) is required as a cofactor.

The protein resides in the cytoplasm. It carries out the reaction tRNA(Met) + L-methionine + ATP = L-methionyl-tRNA(Met) + AMP + diphosphate. Functionally, is required not only for elongation of protein synthesis but also for the initiation of all mRNA translation through initiator tRNA(fMet) aminoacylation. This is Methionine--tRNA ligase from Francisella tularensis subsp. holarctica (strain FTNF002-00 / FTA).